Reading from the N-terminus, the 708-residue chain is MGLTAYGNRRVQPGELPFGANLTLIHTRAQPVICSKLLLTKRVSPISFFLSKFQNSWGEDGWVQLDQLPSPNAVSSDQVHCSAGCTHRKCGWAASKSKEKVPARPHGVCDGVCTDYSQCTQPCPPDTQGNMGFSCRQKTWHKITDTCQTLNALNIFEEDSRLVQPFEDNIKISVYTGKSETITDMLLQKCPTDLSCVIRNIQQSPWIPGNIAVIVQLLHNISTAIWTGVDEAKMQSYSTIANHILNSKSISNWTFIPDRNSSYILLHSVNSFARRLFIDKHPVDISDVFIHTMGTTISGDNIGKNFTFSMRINDTSNEVTGRVLISRDELRKVPSPSQVISIAFPTIGAILEASLLENVTVNGLVLSAILPKELKRISLIFEKISKSEERRTQCVGWHSVENRWDQQACKMIQENSQQAVCKCRPSKLFTSFSILMSPHILESLILTYITYVGLGISICSLILCLSIEVLVWSQVTKTEITYLRHVCIVNIAATLLMADVWFIVASFLSGPITHHKGCVAATFFVHFFYLSVFFWMLAKALLILYGIMIVFHTLPKSVLVASLFSVGYGCPLAIAAITVAATEPGKGYLRPEICWLNWDMTKALLAFVIPALAIVVVNLITVTLVIVKTQRAAIGNSMFQEVRAIVRISKNIAILTPLLGLTWGFGVATVIDDRSLAFHIIFSLLNAFQVSPDASDQVQSERIHEDVL.

At 1–451 (MGLTAYGNRR…ESLILTYITY (451 aa)) the chain is on the extracellular side. N-linked (GlcNAc...) asparagine glycosylation is found at asparagine 21, asparagine 220, asparagine 252, asparagine 260, asparagine 305, asparagine 313, and asparagine 358. Residues 293–442 (MGTTISGDNI…SILMSPHILE (150 aa)) enclose the GAIN-B domain. 2 disulfides stabilise this stretch: cysteine 394–cysteine 421 and cysteine 409–cysteine 423. The tract at residues 394–442 (CVGWHSVENRWDQQACKMIQENSQQAVCKCRPSKLFTSFSILMSPHILE) is GPS. The chain crosses the membrane as a helical span at residues 452 to 472 (VGLGISICSLILCLSIEVLVW). At 473–487 (SQVTKTEITYLRHVC) the chain is on the cytoplasmic side. A helical membrane pass occupies residues 488–508 (IVNIAATLLMADVWFIVASFL). At 509 to 530 (SGPITHHKGCVAATFFVHFFYL) the chain is on the extracellular side. A helical transmembrane segment spans residues 531-551 (SVFFWMLAKALLILYGIMIVF). Topologically, residues 552–557 (HTLPKS) are cytoplasmic. The helical transmembrane segment at 558–578 (VLVASLFSVGYGCPLAIAAIT) threads the bilayer. At 579 to 606 (VAATEPGKGYLRPEICWLNWDMTKALLA) the chain is on the extracellular side. A helical membrane pass occupies residues 607–627 (FVIPALAIVVVNLITVTLVIV). The Cytoplasmic portion of the chain corresponds to 628–650 (KTQRAAIGNSMFQEVRAIVRISK). A helical transmembrane segment spans residues 651–671 (NIAILTPLLGLTWGFGVATVI). Residues 672–674 (DDR) are Extracellular-facing. A helical transmembrane segment spans residues 675-695 (SLAFHIIFSLLNAFQVSPDAS). At 696–708 (DQVQSERIHEDVL) the chain is on the cytoplasmic side.

Belongs to the G-protein coupled receptor 2 family. Adhesion G-protein coupled receptor (ADGR) subfamily. In terms of tissue distribution, high expression in kidney. Up-regulated in lung adenocarcinomas and prostate cancers.

It is found in the membrane. Functionally, orphan receptor. The protein is Putative adhesion G protein-coupled receptor F2P of Homo sapiens (Human).